We begin with the raw amino-acid sequence, 335 residues long: Ubiquinone biosynthesis protein COQ4, mitochondrial (335 aa).

The N-terminal 10 residues, 1–10 (MLRLSLLRST), are a transit peptide targeting the mitochondrion. Residues histidine 210, aspartate 211, histidine 214, and glutamate 226 each coordinate Zn(2+).

It belongs to the COQ4 family. Component of a multi-subunit COQ enzyme complex, composed of at least COQ3, COQ4, COQ5, COQ6, COQ7 and COQ9. Interacts with COQ3. It depends on Zn(2+) as a cofactor.

It localises to the mitochondrion inner membrane. It catalyses the reaction 4-hydroxy-3-methoxy-5-(all-trans-hexaprenyl)benzoate + H(+) = 2-methoxy-6-(all-trans-hexaprenyl)phenol + CO2. It participates in cofactor biosynthesis; ubiquinone biosynthesis. Lyase that catalyzes the C1-decarboxylation of 4-hydroxy-3-methoxy-5-(all-trans-hexaprenyl)benzoic acid into 2-methoxy-6-(all-trans-hexaprenyl)phenol during ubiquinone biosynthesis. The protein is Ubiquinone biosynthesis protein COQ4, mitochondrial of Saccharomyces cerevisiae (strain YJM789) (Baker's yeast).